The primary structure comprises 268 residues: UPF0328 protein ECU10_1850 (268 aa).

This sequence belongs to the UPF0328 family.

The chain is UPF0328 protein ECU10_1850 from Encephalitozoon cuniculi (strain GB-M1) (Microsporidian parasite).